Reading from the N-terminus, the 401-residue chain is Forkhead box protein H1 (401 aa).

The tract at residues 32–57 (MGPRDNSQLRPPEAESLSKTPKRRKK) is disordered. The segment at residues 64 to 163 (KPPYTYLAMI…QNTALCRRWQ (100 aa)) is a DNA-binding region (fork-head). Positions 179 to 251 (VLHGQPYQPP…PSSSSETPLW (73 aa)) are disordered. Residues 185-195 (YQPPSPPPPPR) show a composition bias toward pro residues. A compositionally biased stretch (polar residues) spans 221–230 (GQSTAAQAGT). Residues 307-390 (LWGQLPTSYL…VSHPRDLAAP (84 aa)) are SMAD-interaction domain (SID). The Fast/FoxH1 motif 1 (FM1) motif lies at 311–315 (LPTSY). The Fast/FoxH1 motif 2 (FM2) signature appears at 321-327 (PNVVMPL). An SMAD interaction motif (SIM) motif is present at residues 363–384 (LDSLFQGVPPNKSIYDVWVSHP).

Interacts with the MH2 domains of SMAD2 and SMAD3.

It is found in the nucleus. Functionally, transcriptional activator. Recognizes and binds to the DNA sequence 5'-TGT[GT][GT]ATT-3'. Required for induction of the goosecoid (GSC) promoter by TGF-beta or activin signaling. Forms a transcriptionally active complex containing FOXH1/SMAD2/SMAD4 on a site on the GSC promoter called TARE (TGF-beta/activin response element). The polypeptide is Forkhead box protein H1 (Foxh1) (Mus musculus (Mouse)).